A 317-amino-acid chain; its full sequence is Ataxin-3 homolog (317 aa).

Positions 7 to 178 constitute a Josephin domain; sequence INSIFFEHQE…RSDADDLISL (172 aa). Cys20 functions as the Nucleophile in the catalytic mechanism. His117 (proton acceptor) is an active-site residue. Asn132 is an active-site residue. 2 UIM domains span residues 219–239 and 247–264; these read SQEEKDLAIAFAMSMETKDGS and EIDEENLRKAIELSQAPG. The interval 254-317 is disordered; that stretch reads RKAIELSQAP…KKKEERNDEK (64 aa). Positions 276-293 are enriched in polar residues; it reads RSRSSTPPGASEPFSNAE. A compositionally biased stretch (basic and acidic residues) spans 294–317; that stretch reads QQRRDRQKFLERFEKKKEERNDEK. Residues 296–299 are interaction with cdc-48.1 and cdc-48.2; the sequence is RRDR.

In terms of assembly, forms a complex composed of deubiquitinating enzyme atx-3, adapter ubxn-5 and cdc-48.1. Forms a complex composed of deubiquitinating enzyme atx-3, E4 ubiquitin-protein ligase ufd-2 and cdc-48.1. Interacts (via RRDR motif) with cdc-48.1 (via N-terminus) and cdc-48.2 (via N-terminus); the interaction with cdc-48.1 is not required for atx-3 enzymatic activity. Interacts (via C-terminus) with ubxn-5. May interact with ned-8. As to expression, expressed in germline (at protein level). Expressed in spermatheca, pharynx, dorsal and ventral cords, some head neurons, hypodermis, body wall muscles and coelomocytes.

It is found in the cytoplasm. It localises to the nucleus. The protein localises to the nucleolus. It carries out the reaction Thiol-dependent hydrolysis of ester, thioester, amide, peptide and isopeptide bonds formed by the C-terminal Gly of ubiquitin (a 76-residue protein attached to proteins as an intracellular targeting signal).. Its function is as follows. Acts as a chain editing deubiquitinating enzyme that binds and cleaves 'Lys-48'-linked polyubiquitin chains, with a preference for chains containing four or more ubiquitin molecules thereby modulating protein degradation by the ubiquitin-proteasome pathway. Probably by regulating the IGF-1-insulin-like pathway, regulates lifespan. Regulates germline DNA double-strand-break repair and apoptosis in response to DNA damage by recruiting E4 ubiquitin-protein ligase ufd-2 to DNA repair foci. Interacts with key regulators of transcription and represses transcription. Acts as a histone-binding protein that regulates transcription. The polypeptide is Ataxin-3 homolog (atx-3) (Caenorhabditis elegans).